We begin with the raw amino-acid sequence, 1341 residues long: DNA-directed RNA polymerase subunit Rpo1N (1341 aa).

Zn(2+)-binding residues include Cys62, Cys65, Cys72, His75, Cys102, Cys105, Cys149, and Cys152. Mg(2+) is bound by residues Asp918, Asp920, and Asp922.

It belongs to the RNA polymerase beta' chain family. Part of the RNA polymerase complex. Requires Mg(2+) as cofactor. Zn(2+) serves as cofactor. This protein undergoes a protein self splicing that involves a post-translational excision of the intervening region (intein) followed by peptide ligation.

The protein localises to the cytoplasm. The enzyme catalyses RNA(n) + a ribonucleoside 5'-triphosphate = RNA(n+1) + diphosphate. Functionally, DNA-dependent RNA polymerase (RNAP) catalyzes the transcription of DNA into RNA using the four ribonucleoside triphosphates as substrates. Forms the clamp head domain. The sequence is that of DNA-directed RNA polymerase subunit Rpo1N from Methanocaldococcus jannaschii (strain ATCC 43067 / DSM 2661 / JAL-1 / JCM 10045 / NBRC 100440) (Methanococcus jannaschii).